We begin with the raw amino-acid sequence, 75 residues long: Mitochondrial import receptor subunit TOM7-1 (75 aa).

M1 is modified (N-acetylmethionine). A disordered region spans residues 1 to 28 (MESTISLKVNKGKGKGSKGASSSDDKSK). Topologically, residues 1–46 (MESTISLKVNKGKGKGSKGASSSDDKSKFDVVKEWTNWSLKKAKVV) are cytoplasmic. The chain crosses the membrane as a helical span at residues 47-64 (THYGFIPLVIFVGMNSDP). Residues 65-75 (KPHLFQLLSPV) are Mitochondrial intermembrane-facing.

It belongs to the Tom7 family. Forms part of the preprotein translocase complex of the outer mitochondrial membrane (TOM complex) which consists of at least 6 different proteins (TOM5, TOM6, TOM7, TOM20, TOM22/TOM9 and TOM40). Expressed in roots, flowers, young cotyledons and leaves.

It localises to the mitochondrion outer membrane. In terms of biological role, seems to act as a modulator of the dynamics of the mitochondrial protein transport machinery. Seems to promote the dissociation of subunits of the outer membrane translocase. In Arabidopsis thaliana (Mouse-ear cress), this protein is Mitochondrial import receptor subunit TOM7-1 (TOM7-1).